The chain runs to 163 residues: uncharacterized protein (163 aa).

Disordered stretches follow at residues 1-78 and 115-163; these read MHSL…NPHS and PKWL…LPCH.

This is an uncharacterized protein from Homo sapiens (Human).